We begin with the raw amino-acid sequence, 457 residues long: Argininosuccinate lyase (457 aa).

The protein belongs to the lyase 1 family. Argininosuccinate lyase subfamily.

The protein resides in the cytoplasm. The catalysed reaction is 2-(N(omega)-L-arginino)succinate = fumarate + L-arginine. Its pathway is amino-acid biosynthesis; L-arginine biosynthesis; L-arginine from L-ornithine and carbamoyl phosphate: step 3/3. This is Argininosuccinate lyase from Psychrobacter cryohalolentis (strain ATCC BAA-1226 / DSM 17306 / VKM B-2378 / K5).